The chain runs to 309 residues: Olfactory receptor 5AK2 (309 aa).

Residues 1-25 (MTLGNSTEVTEFYLLGFGAQHEFWC) lie on the Extracellular side of the membrane. N-linked (GlcNAc...) asparagine glycosylation occurs at Asn-5. Residues 26–46 (ILFIVFLLIYVTSIMGNSGII) traverse the membrane as a helical segment. Over 47–54 (LLINTDSR) the chain is Cytoplasmic. The chain crosses the membrane as a helical span at residues 55–75 (FQTLTYFFLQHLAFVDICYTS). Over 76 to 99 (AITPKMLQSFTEEKNLMLFQGCVI) the chain is Extracellular. Residues Cys-97 and Cys-189 are joined by a disulfide bond. A helical membrane pass occupies residues 100–120 (QFLVYATFATSDCYLLAMMAV). The Cytoplasmic portion of the chain corresponds to 121–133 (DPYVAICKPLHYT). The chain crosses the membrane as a helical span at residues 134–154 (VIMSRTVCIRLVAGSYIMGSI). The N-linked (GlcNAc...) asparagine glycan is linked to Asn-155. Topologically, residues 155 to 196 (NASVQTGFTCSLSFCKSNSINHFFCDVPPILALSCSNVDINI) are extracellular. Residues 197-217 (MLLVVFVGSNLIFTGLVVIFS) traverse the membrane as a helical segment. The Cytoplasmic portion of the chain corresponds to 218–237 (YIYIMATILKMSSSAGRKKS). A helical membrane pass occupies residues 238-258 (FSTCASHLTAVTIFYGTLSYM). Residues 259 to 271 (YLQSHSNNSQENM) lie on the Extracellular side of the membrane. Asn-265 is a glycosylation site (N-linked (GlcNAc...) asparagine). Residues 272 to 292 (KVAFIFYGTVIPMLNPLIYSL) traverse the membrane as a helical segment. At 293 to 309 (RNKEVKEALKVIGKKLF) the chain is on the cytoplasmic side.

Belongs to the G-protein coupled receptor 1 family.

The protein resides in the cell membrane. In terms of biological role, odorant receptor. This Homo sapiens (Human) protein is Olfactory receptor 5AK2 (OR5AK2).